The sequence spans 1513 residues: Protein tincar (1513 aa).

At 1–77 (MGGKHQGSGA…DSGSYLHLNS (77 aa)) the chain is on the cytoplasmic side. Residues 78–98 (LWSIWYGVMLTLFQGYLAMHG) form a helical membrane-spanning segment. Residues 99 to 120 (AYRFLGCSLIPWKIEPVAELNL) are Extracellular-facing. The helical transmembrane segment at 121–141 (QIVLSGVVFILLPVFFTSAVF) threads the bilayer. At 142 to 181 (KVGNLANDGIKLATGARERRCTLSPHDGLEEESRGGTLRA) the chain is on the cytoplasmic side. The chain crosses the membrane as a helical span at residues 182–202 (LWTHGGPTAAFVHIVIALCLL). Over 203 to 668 (LPRLLLEARI…VAIFSQPPSA (466 aa)) the chain is Extracellular. 3 disordered regions span residues 247-266 (TPFP…HQHG), 354-373 (ERQE…DEGV), and 383-532 (MPDF…SIHR). Over residues 427-466 (ASSSSSSTTSTTTTTTTSTTTTAATTTSTRGTSTTTTTTT) the composition is skewed to low complexity. A compositionally biased stretch (basic residues) spans 478-507 (SAHHHHGKSRKHHKHHNKQRQQQPPRRHHV). Residues 523–532 (TTTRDSSIHR) are compositionally biased toward basic and acidic residues. The helical transmembrane segment at 669-689 (EFVNLLCALLVWSVRYPAVFW) threads the bilayer. The Cytoplasmic portion of the chain corresponds to 690–696 (NTSKAFA). Residues 697–717 (CVFSLQMVVAALDIILGYVGI) form a helical membrane-spanning segment. At 718 to 736 (SNLYKLQIYAEAMPVHQPG) the chain is on the extracellular side. A helical membrane pass occupies residues 737-757 (LILNAVVTLALYLLSTALVLA). The Cytoplasmic segment spans residues 758-787 (SSMVMYLYGHGRLATRMRDRSIITLKTHQT). Residues 788 to 808 (WIYFAHCASLCFVLALAVVKA) form a helical membrane-spanning segment. Topologically, residues 809–826 (PLLNDLSATYKNNLHCPT) are extracellular. Residues 827 to 847 (FLAALVGVTHLLLWIVIWLCL) traverse the membrane as a helical segment. The Cytoplasmic segment spans residues 848–1513 (TIKRRWHFKL…CGLYVTAQLH (666 aa)). Low complexity-rich tracts occupy residues 879 to 903 (SSGQ…VNGG) and 1060 to 1071 (QQQQQQQQQQRQ). Disordered stretches follow at residues 879–913 (SSGQ…MSTA), 1045–1090 (EYDE…SGLG), 1115–1155 (ASTS…HSAG), 1173–1214 (EHHH…PHQH), and 1231–1335 (AHIA…DPAA). Residues 1122-1149 (PPQPSAQAPPPPPPLPIKGAPVPQPPAV) are compositionally biased toward pro residues. Low complexity-rich tracts occupy residues 1179–1208 (LQHS…LQQQ) and 1255–1285 (TPRS…SGVH). Residues 1286–1296 (SGEERELEVII) show a composition bias toward basic and acidic residues. The segment covering 1303 to 1314 (KPPPRPPQPPIQ) has biased composition (pro residues). Residues 1324–1335 (MRMSSFNADPAA) show a composition bias toward polar residues.

Expression varies in tissues throughout development. At stage 5, expressed in the embryo dorsal region followed by expression in a striped pattern at stage 6. During gastrulation, expressed in ventral region and ventral nerve cord. Also detected in many neurons in the externa sensilla and chordotonal organ. At stage 16, expressed on the surface of the midgut. Additionally, expressed in a subset of cardioblasts (Tin+ subpopulation) during dorsal vessel formation. In third-instar larval tissues, expressed in the eye and antennal disks. In the antennal disks, expressed in the second antennal segments. In the eye disks, strongest expression found in the ocelli, and in the differentiating ommatidial cells. Also expressed in all cells within and in the vicinity of the morphogenetic furrow.

It localises to the membrane. Functionally, involved in eye morphogenesis. May be essential for the normal differentiation of ommatidial cells. The sequence is that of Protein tincar (tinc) from Drosophila melanogaster (Fruit fly).